The following is a 147-amino-acid chain: UPF0178 protein Patl_1318 (147 aa).

Belongs to the UPF0178 family.

The sequence is that of UPF0178 protein Patl_1318 from Pseudoalteromonas atlantica (strain T6c / ATCC BAA-1087).